The chain runs to 410 residues: Arginine deiminase (410 aa).

Cysteine 400 acts as the Amidino-cysteine intermediate in catalysis.

This sequence belongs to the arginine deiminase family.

The protein resides in the cytoplasm. It catalyses the reaction L-arginine + H2O = L-citrulline + NH4(+). The protein operates within amino-acid degradation; L-arginine degradation via ADI pathway; carbamoyl phosphate from L-arginine: step 1/2. The polypeptide is Arginine deiminase (Levilactobacillus brevis (strain ATCC 367 / BCRC 12310 / CIP 105137 / JCM 1170 / LMG 11437 / NCIMB 947 / NCTC 947) (Lactobacillus brevis)).